Consider the following 226-residue polypeptide: Ribonuclease 3 (226 aa).

Positions 2–129 (IETISKTIKY…LIGAIYLDGG (128 aa)) constitute an RNase III domain. E42 is a Mg(2+) binding site. D46 is an active-site residue. Mg(2+)-binding residues include N115 and E118. E118 is a catalytic residue. The DRBM domain maps to 154–223 (DAKTILQEFI…ASLMLNQIKD (70 aa)).

This sequence belongs to the ribonuclease III family. As to quaternary structure, homodimer. Mg(2+) is required as a cofactor.

The protein resides in the cytoplasm. It catalyses the reaction Endonucleolytic cleavage to 5'-phosphomonoester.. In terms of biological role, digests double-stranded RNA. Involved in the processing of primary rRNA transcript to yield the immediate precursors to the large and small rRNAs (23S and 16S). Processes some mRNAs, and tRNAs when they are encoded in the rRNA operon. Processes pre-crRNA and tracrRNA of type II CRISPR loci if present in the organism. The chain is Ribonuclease 3 from Ehrlichia canis (strain Jake).